Reading from the N-terminus, the 153-residue chain is Large ribosomal subunit protein uL13 (153 aa).

This sequence belongs to the universal ribosomal protein uL13 family. As to quaternary structure, part of the 50S ribosomal subunit.

Functionally, this protein is one of the early assembly proteins of the 50S ribosomal subunit, although it is not seen to bind rRNA by itself. It is important during the early stages of 50S assembly. In Methylobacterium sp. (strain 4-46), this protein is Large ribosomal subunit protein uL13.